We begin with the raw amino-acid sequence, 366 residues long: Nodulation protein NolL (366 aa).

9 helical membrane passes run 27–47 (FVKG…LVIY), 62–82 (IYMF…SGTI), 98–118 (LLIP…AAFF), 140–160 (FLWA…FNLL), 164–184 (ILCA…IVPL), 212–232 (HKSL…LDWG), 253–273 (VLLM…SLFH), 286–306 (LVAV…GAVF), and 324–344 (IVVA…VLWI).

It belongs to the acyltransferase 3 family.

The protein resides in the cell membrane. Its function is as follows. Thought to be an acetyltransferase that modifies the fucose of the nod factor. This chain is Nodulation protein NolL (nolL), found in Sinorhizobium fredii (strain NBRC 101917 / NGR234).